The chain runs to 630 residues: Glutamyl-tRNA(Gln) amidotransferase subunit E (630 aa).

Belongs to the GatB/GatE family. GatE subfamily. In terms of assembly, heterodimer of GatD and GatE.

The catalysed reaction is L-glutamyl-tRNA(Gln) + L-glutamine + ATP + H2O = L-glutaminyl-tRNA(Gln) + L-glutamate + ADP + phosphate + H(+). In terms of biological role, allows the formation of correctly charged Gln-tRNA(Gln) through the transamidation of misacylated Glu-tRNA(Gln) in organisms which lack glutaminyl-tRNA synthetase. The reaction takes place in the presence of glutamine and ATP through an activated gamma-phospho-Glu-tRNA(Gln). The GatDE system is specific for glutamate and does not act on aspartate. The protein is Glutamyl-tRNA(Gln) amidotransferase subunit E of Methanocaldococcus jannaschii (strain ATCC 43067 / DSM 2661 / JAL-1 / JCM 10045 / NBRC 100440) (Methanococcus jannaschii).